Consider the following 567-residue polypeptide: Urease subunit alpha 1 (567 aa).

Positions 128–567 (GAVDTHVHYI…LPLAQLYHLF (440 aa)) constitute a Urease domain. Ni(2+) is bound by residues H133, H135, and K216. The residue at position 216 (K216) is an N6-carboxylysine. Position 218 (H218) interacts with substrate. Ni(2+) contacts are provided by H245 and H271. H319 (proton donor) is an active-site residue. D359 contributes to the Ni(2+) binding site.

This sequence belongs to the metallo-dependent hydrolases superfamily. Urease alpha subunit family. Heterotrimer of UreA (gamma), UreB (beta) and UreC (alpha) subunits. Three heterotrimers associate to form the active enzyme. Ni cation is required as a cofactor. In terms of processing, carboxylation allows a single lysine to coordinate two nickel ions.

Its subcellular location is the cytoplasm. The catalysed reaction is urea + 2 H2O + H(+) = hydrogencarbonate + 2 NH4(+). The protein operates within nitrogen metabolism; urea degradation; CO(2) and NH(3) from urea (urease route): step 1/1. The protein is Urease subunit alpha 1 of Psychrobacter cryohalolentis (strain ATCC BAA-1226 / DSM 17306 / VKM B-2378 / K5).